A 134-amino-acid chain; its full sequence is Large ribosomal subunit protein uL14 (134 aa).

This sequence belongs to the universal ribosomal protein uL14 family. In terms of assembly, in the 70S ribosome, L14 and L19 interact and together make contacts with the 16S rRNA in bridges B5 and B8. Part of the 50S ribosomal subunit. Forms a cluster with proteins L3 and L19.

Functionally, forms part of two intersubunit bridges in the 70S ribosome. Binds to 23S rRNA. The polypeptide is Large ribosomal subunit protein uL14 (Deinococcus radiodurans (strain ATCC 13939 / DSM 20539 / JCM 16871 / CCUG 27074 / LMG 4051 / NBRC 15346 / NCIMB 9279 / VKM B-1422 / R1)).